Reading from the N-terminus, the 351-residue chain is Dihydroorotate dehydrogenase (quinone) (351 aa).

FMN contacts are provided by residues 61-65 (AGLDK) and threonine 85. Position 65 (lysine 65) interacts with substrate. 110–114 (NRMGF) is a binding site for substrate. Asparagine 139 and asparagine 172 together coordinate FMN. Residue asparagine 172 coordinates substrate. Serine 175 (nucleophile) is an active-site residue. Asparagine 177 provides a ligand contact to substrate. Residues lysine 217 and threonine 245 each contribute to the FMN site. Residue 246 to 247 (NT) coordinates substrate. FMN contacts are provided by residues glycine 268, glycine 297, and 318–319 (YS).

This sequence belongs to the dihydroorotate dehydrogenase family. Type 2 subfamily. In terms of assembly, monomer. Requires FMN as cofactor.

The protein resides in the cell membrane. It catalyses the reaction (S)-dihydroorotate + a quinone = orotate + a quinol. The protein operates within pyrimidine metabolism; UMP biosynthesis via de novo pathway; orotate from (S)-dihydroorotate (quinone route): step 1/1. Its function is as follows. Catalyzes the conversion of dihydroorotate to orotate with quinone as electron acceptor. The protein is Dihydroorotate dehydrogenase (quinone) of Stenotrophomonas maltophilia (strain K279a).